A 379-amino-acid chain; its full sequence is Protein RecA (379 aa).

Residue 79–86 (GPESSGKT) coordinates ATP.

The protein belongs to the RecA family.

The protein resides in the cytoplasm. In terms of biological role, can catalyze the hydrolysis of ATP in the presence of single-stranded DNA, the ATP-dependent uptake of single-stranded DNA by duplex DNA, and the ATP-dependent hybridization of homologous single-stranded DNAs. It interacts with LexA causing its activation and leading to its autocatalytic cleavage. The protein is Protein RecA of Streptococcus agalactiae.